The following is a 206-amino-acid chain: ATP phosphoribosyltransferase (206 aa).

Belongs to the ATP phosphoribosyltransferase family. Short subfamily. As to quaternary structure, heteromultimer composed of HisG and HisZ subunits.

It localises to the cytoplasm. It carries out the reaction 1-(5-phospho-beta-D-ribosyl)-ATP + diphosphate = 5-phospho-alpha-D-ribose 1-diphosphate + ATP. It functions in the pathway amino-acid biosynthesis; L-histidine biosynthesis; L-histidine from 5-phospho-alpha-D-ribose 1-diphosphate: step 1/9. Its function is as follows. Catalyzes the condensation of ATP and 5-phosphoribose 1-diphosphate to form N'-(5'-phosphoribosyl)-ATP (PR-ATP). Has a crucial role in the pathway because the rate of histidine biosynthesis seems to be controlled primarily by regulation of HisG enzymatic activity. The sequence is that of ATP phosphoribosyltransferase from Sulfurovum sp. (strain NBC37-1).